The following is a 251-amino-acid chain: Demethylmenaquinone methyltransferase (251 aa).

Residues Thr66, Asp87, and 115–116 (NA) each bind S-adenosyl-L-methionine.

Belongs to the class I-like SAM-binding methyltransferase superfamily. MenG/UbiE family.

It catalyses the reaction a 2-demethylmenaquinol + S-adenosyl-L-methionine = a menaquinol + S-adenosyl-L-homocysteine + H(+). The protein operates within quinol/quinone metabolism; menaquinone biosynthesis; menaquinol from 1,4-dihydroxy-2-naphthoate: step 2/2. Functionally, methyltransferase required for the conversion of demethylmenaquinol (DMKH2) to menaquinol (MKH2). This chain is Demethylmenaquinone methyltransferase, found in Symbiobacterium thermophilum (strain DSM 24528 / JCM 14929 / IAM 14863 / T).